A 238-amino-acid polypeptide reads, in one-letter code: Large ribosomal subunit protein uL1 (238 aa).

The protein belongs to the universal ribosomal protein uL1 family. In terms of assembly, part of the 50S ribosomal subunit.

In terms of biological role, binds directly to 23S rRNA. The L1 stalk is quite mobile in the ribosome, and is involved in E site tRNA release. Protein L1 is also a translational repressor protein, it controls the translation of the L11 operon by binding to its mRNA. This is Large ribosomal subunit protein uL1 from Salinispora tropica (strain ATCC BAA-916 / DSM 44818 / JCM 13857 / NBRC 105044 / CNB-440).